We begin with the raw amino-acid sequence, 100 residues long: Small ribosomal subunit protein uS14c (100 aa).

It belongs to the universal ribosomal protein uS14 family. As to quaternary structure, part of the 30S ribosomal subunit.

Its subcellular location is the plastid. It localises to the chloroplast. Binds 16S rRNA, required for the assembly of 30S particles. The protein is Small ribosomal subunit protein uS14c of Helianthus annuus (Common sunflower).